A 611-amino-acid polypeptide reads, in one-letter code: MPEVADTCSLASPASVCRTQHLHLRCSVDFARRALTGTAALTVQSQEDNLRSLTLDTKDLTIEKVVINGQEVKYTLGESQGYKGSPMEISLPIALSKNQEVVIEISFETSPKSSALQWLTPEQTSGKQHPYLFSQCQAIHCRAILPCQDTPSVKLTYTAEVSVPKELVALMSAIRDGEAPDPEDPSRKIYRFNQRVPIPCYLIALVVGALESRQIGPRTLVWSEKEQVEKSAYEFSETESMLKIAEDLGGPYVWGQYDLLVLPPSFPYGGMENPCLTFVTPTLLAGDKSLSNVIAHEISHSWTGNLVTNKTWDHFWLNEGHTVYLERHICGRLFGEKFRHFHALGGWGELQNTIKTFGESHPFTKLVVDLKDVDPDVAYSSIPYEKGFALLFYLEQLLGGPEVFLGFLKAYVEKFSYQSVTTDDWKSFLYAHFKDKVDLLNQVDWNAWLYAPGLPPVKPNYDVTLTNACIALSQRWVTAKEEDLNSFSIEDLKDLSSHQLNEFLAQVLQKAPLPLGHIKRMQEVYNFNAINNSEIRFRWLRLCIQSKWEEAIPLALKMATEQGRMKFTRPLFKDLAAFDKSHDQAVRTYQEHKACMHPVTAMLVGKDLKVD.

Position 73 is an N6-acetyllysine (lysine 73). A peptide is bound by residues 135–137 (QCQ) and 267–272 (PYGGME). A Zn(2+)-binding site is contributed by histidine 296. Catalysis depends on glutamate 297, which acts as the Proton acceptor. Zn(2+)-binding residues include histidine 300 and glutamate 319. At lysine 337 the chain carries N6-acetyllysine. The active-site Proton donor is tyrosine 384. Lysine 414 is subject to N6-acetyllysine. Position 416 is a phosphoserine (serine 416). 564 to 566 (RMK) provides a ligand contact to a peptide. Lysine 573 bears the N6-acetyllysine mark.

This sequence belongs to the peptidase M1 family. In terms of assembly, monomer. The cofactor is Zn(2+). Post-translationally, phosphorylation at Ser-416 inhibits leukotriene-A4 hydrolase activity.

It is found in the cytoplasm. It catalyses the reaction leukotriene A4 + H2O = leukotriene B4. The enzyme catalyses (5S,6S)-epoxy-(18R)-hydroxy-(7E,9E,11Z,14Z,16E)-eicosapentaenoate + H2O = resolvin E1. The catalysed reaction is (5S,6S)-epoxy-(18S)-hydroxy-(7E,9E,11Z,14Z,16E)-eicosapentaenoate + H2O = 18S-resolvin E1. It carries out the reaction Release of the N-terminal residue from a tripeptide.. Its pathway is lipid metabolism; leukotriene B4 biosynthesis. Its activity is regulated as follows. Inhibited by bestatin. Inhibited by captopril. The epoxide hydrolase activity is restrained by suicide inactivation that involves binding of LTA4 to Tyr-379. 4-(4-benzylphenyl)thiazol-2-amine (ARM1) selectively inhibits the epoxide hydrolase activity. In terms of biological role, bifunctional zinc metalloenzyme that comprises both epoxide hydrolase (EH) and aminopeptidase activities. Acts as an epoxide hydrolase to catalyze the conversion of LTA4 to the pro-inflammatory mediator leukotriene B4 (LTB4). Also has aminopeptidase activity, with high affinity for N-terminal arginines of various synthetic tripeptides. In addition to its pro-inflammatory EH activity, may also counteract inflammation by its aminopeptidase activity, which inactivates by cleavage another neutrophil attractant, the tripeptide Pro-Gly-Pro (PGP), a bioactive fragment of collagen generated by the action of matrix metalloproteinase-9 (MMP9) and prolylendopeptidase (PREPL). Involved also in the biosynthesis of resolvin E1 and 18S-resolvin E1 from eicosapentaenoic acid, two lipid mediators that show potent anti-inflammatory and pro-resolving actions. The protein is Leukotriene A-4 hydrolase (Lta4h) of Rattus norvegicus (Rat).